A 296-amino-acid chain; its full sequence is Homoserine kinase (296 aa).

Residue 84 to 94 participates in ATP binding; the sequence is PLARGLGSSSS.

Belongs to the GHMP kinase family. Homoserine kinase subfamily.

It localises to the cytoplasm. It catalyses the reaction L-homoserine + ATP = O-phospho-L-homoserine + ADP + H(+). It functions in the pathway amino-acid biosynthesis; L-threonine biosynthesis; L-threonine from L-aspartate: step 4/5. Catalyzes the ATP-dependent phosphorylation of L-homoserine to L-homoserine phosphate. This chain is Homoserine kinase, found in Lactococcus lactis subsp. cremoris (strain SK11).